The following is a 22-amino-acid chain: Bacteriocin serracin-P 23 kDa subunit (22 aa).

In terms of biological role, major component of a prophage tail tube. Functionally, antibacterial activity against Gram-negative bacterium E.amylovora. The polypeptide is Bacteriocin serracin-P 23 kDa subunit (Serratia plymuthica).